The primary structure comprises 174 residues: Large ribosomal subunit protein uL6 (174 aa).

The protein belongs to the universal ribosomal protein uL6 family. In terms of assembly, part of the 50S ribosomal subunit.

In terms of biological role, this protein binds to the 23S rRNA, and is important in its secondary structure. It is located near the subunit interface in the base of the L7/L12 stalk, and near the tRNA binding site of the peptidyltransferase center. The sequence is that of Large ribosomal subunit protein uL6 from Acidithiobacillus ferrooxidans (strain ATCC 23270 / DSM 14882 / CIP 104768 / NCIMB 8455) (Ferrobacillus ferrooxidans (strain ATCC 23270)).